Here is a 363-residue protein sequence, read N- to C-terminus: Cobalt-precorrin-5B C(1)-methyltransferase (363 aa).

Belongs to the CbiD family.

It catalyses the reaction Co-precorrin-5B + S-adenosyl-L-methionine = Co-precorrin-6A + S-adenosyl-L-homocysteine. It participates in cofactor biosynthesis; adenosylcobalamin biosynthesis; cob(II)yrinate a,c-diamide from sirohydrochlorin (anaerobic route): step 6/10. Functionally, catalyzes the methylation of C-1 in cobalt-precorrin-5B to form cobalt-precorrin-6A. In Burkholderia mallei (strain ATCC 23344), this protein is Cobalt-precorrin-5B C(1)-methyltransferase.